Reading from the N-terminus, the 806-residue chain is Acetyl-CoA decarbonylase/synthase complex subunit alpha 1 (806 aa).

[4Fe-4S] cluster is bound by residues cysteine 73, cysteine 76, cysteine 77, cysteine 79, cysteine 84, and cysteine 94. Histidine 117 contributes to the CO binding site. 3 residues coordinate [Ni-4Fe-4S] cluster: histidine 250, cysteine 278, and cysteine 323. 2 4Fe-4S ferredoxin-type domains span residues 407–436 and 445–475; these read DEQM…IPEA and YSYL…LSVI. Residues cysteine 417, cysteine 420, cysteine 423, cysteine 427, cysteine 455, cysteine 458, cysteine 461, and cysteine 465 each coordinate [4Fe-4S] cluster. [Ni-4Fe-4S] cluster contacts are provided by cysteine 523, cysteine 552, and cysteine 587.

It belongs to the Ni-containing carbon monoxide dehydrogenase family. As to quaternary structure, heterotetramer of two alpha and two epsilon subunits. The ACDS complex is made up of alpha, epsilon, beta, gamma and delta subunits with a probable stoichiometry of (alpha(2)epsilon(2))(4)-beta(8)-(gamma(1)delta(1))(8). [4Fe-4S] cluster serves as cofactor. Requires [Ni-4Fe-4S] cluster as cofactor.

It catalyses the reaction CO + 2 oxidized [2Fe-2S]-[ferredoxin] + H2O = 2 reduced [2Fe-2S]-[ferredoxin] + CO2 + 2 H(+). It functions in the pathway one-carbon metabolism; methanogenesis from acetate. Part of the ACDS complex that catalyzes the reversible cleavage of acetyl-CoA, allowing growth on acetate as sole source of carbon and energy. The alpha-epsilon subcomponent functions as a carbon monoxide dehydrogenase. The protein is Acetyl-CoA decarbonylase/synthase complex subunit alpha 1 of Methanosarcina thermophila.